The following is a 348-amino-acid chain: LIM domain-containing protein unc-97 (348 aa).

LIM zinc-binding domains follow at residues 21 to 73, 82 to 132, 146 to 196, 205 to 255, and 264 to 315; these read CVRC…CEHD, CGKC…CREC, CHKC…CLRC, CGAC…CEQH, and CFKC…CKRC.

As to quaternary structure, interacts with unc-98. Component of an integrin containing attachment complex, composed of at least pat-2, pat-3, pat-4, pat-6, unc-52, unc-97 and unc-112. Restricted to tissue types that attach to the hypodermis, specifically body wall muscles, vulval muscles, and mechanosensory neurons.

The protein resides in the cell junction. It is found in the adherens junction. Its subcellular location is the nucleus. Component of an integrin containing attachment complex, which is required for muscle development and maintenance. Probably function in adherens junction. Affects the structural integrity of the integrin containing muscle adherens junctions and contributes to the mechanosensory functions of touch neurons. This chain is LIM domain-containing protein unc-97, found in Caenorhabditis elegans.